Here is a 244-residue protein sequence, read N- to C-terminus: 3-deoxy-manno-octulosonate cytidylyltransferase (244 aa).

It belongs to the KdsB family.

It localises to the cytoplasm. It catalyses the reaction 3-deoxy-alpha-D-manno-oct-2-ulosonate + CTP = CMP-3-deoxy-beta-D-manno-octulosonate + diphosphate. It participates in nucleotide-sugar biosynthesis; CMP-3-deoxy-D-manno-octulosonate biosynthesis; CMP-3-deoxy-D-manno-octulosonate from 3-deoxy-D-manno-octulosonate and CTP: step 1/1. The protein operates within bacterial outer membrane biogenesis; lipopolysaccharide biosynthesis. In terms of biological role, activates KDO (a required 8-carbon sugar) for incorporation into bacterial lipopolysaccharide in Gram-negative bacteria. The sequence is that of 3-deoxy-manno-octulosonate cytidylyltransferase from Dichelobacter nodosus (strain VCS1703A).